The primary structure comprises 518 residues: E3 ubiquitin-protein ligase TRIM39 (518 aa).

The RING-type zinc-finger motif lies at 29-70 (CSVCLEYLKEPVIIECGHNFCKACITRWWEDLERDFPCPVCR). The B box-type zinc-finger motif lies at 102-143 (RDESLCPQHHEALSLFCYEDQEAVCLICAISHTHRAHTVVPL). Residues Cys107, His110, Cys129, and His135 each contribute to the Zn(2+) site. Residues 181–250 (ELKRLVESRR…AHLAAEVEGK (70 aa)) are a coiled coil. 2 interaction with CDKN1A regions span residues 268–337 (KNIP…QLIA) and 389–518 (TSGR…TDWE). The 196-residue stretch at 319-514 (SNFPRQYFAL…NAAPLTIRPP (196 aa)) folds into the B30.2/SPRY domain.

This sequence belongs to the TRIM/RBCC family. In terms of assembly, interacts with MOAP1. Interacts with CDKN1A. Autoubiquitinated.

It localises to the cytoplasm. Its subcellular location is the cytosol. The protein localises to the mitochondrion. It is found in the nucleus. It catalyses the reaction S-ubiquitinyl-[E2 ubiquitin-conjugating enzyme]-L-cysteine + [acceptor protein]-L-lysine = [E2 ubiquitin-conjugating enzyme]-L-cysteine + N(6)-ubiquitinyl-[acceptor protein]-L-lysine.. Its pathway is protein modification; protein ubiquitination. E3 ubiquitin-protein ligase. May facilitate apoptosis by inhibiting APC/C-Cdh1-mediated poly-ubiquitination and subsequent proteasome-mediated degradation of the pro-apoptotic protein MOAP1. Regulates the G1/S transition of the cell cycle and DNA damage-induced G2 arrest by stabilizing CDKN1A/p21. Positively regulates CDKN1A/p21 stability by competing with DTL for CDKN1A/p21 binding, therefore disrupting DCX(DTL) E3 ubiquitin ligase complex-mediated CDKN1A/p21 ubiquitination and degradation. This is E3 ubiquitin-protein ligase TRIM39 (TRIM39) from Pan troglodytes (Chimpanzee).